The following is a 160-amino-acid chain: Endoribonuclease YbeY (160 aa).

Positions 125, 129, and 135 each coordinate Zn(2+).

It belongs to the endoribonuclease YbeY family. Zn(2+) is required as a cofactor.

The protein localises to the cytoplasm. Functionally, single strand-specific metallo-endoribonuclease involved in late-stage 70S ribosome quality control and in maturation of the 3' terminus of the 16S rRNA. This chain is Endoribonuclease YbeY, found in Dehalococcoides mccartyi (strain ATCC BAA-2100 / JCM 16839 / KCTC 5957 / BAV1).